The chain runs to 741 residues: MQAKKRYLISLLTGAFLVLLIYLGGGGVPGPAAPGSRSRTHGYNRPDQPWPHFSDPLQHFSPWDHSDTEDYNVHISPRQKRDVNSSVYKGKRCRMQSCFDFSLCQRNGFKVYVYPQQKGEKISESYQNILSTIEGSRFYTSDPGQACVFVLSLDTLDRDQLSPQYVHNLKTKVQSLALWNNGRNHLIFNLYSGTWPDYTEDLGFDIGQAMLAKASISTENFRPNFDISIPLFSKEHPRTGGDRGYLKYNTIPPFRKYMLVFKGKRYLTGIGSDTRNALYHVHNAEDVVLLTTCKHGKDWQKHKDARCDKDNAEYDKYDYREMLHNSTFCLVPRGRRLGSFRFLEALQAACVPVMLSNGWELPFSEVIDWNTAAVIGDERLLLQIPSTVRSIHQDKILALRQQTQFLWEAYFSSVEKIVLTTLEIIQDRVLQQSSRSSVMWNSHPGGLFSLPQYSSYLGDLPFFYAKLGIKPSPKFTAVIHAVTPLVSQSQPILKLIVSVARSQYCAQIIVLWNCDKPLPAKQRWPATAVPIIVIEGENKVMSSRFQPYESLISDAVLSLDEDTVLSTTEVDFAFTVWQSFPERIVGYPARSHFWDNNKERWGYTSKWTNDYSMVLTGAAIYHRYYHFLYTHFLPSSLKSMVDQLANCEDILMNFLVSAVTKLPPVKVTQKKQYKETMMGQSSRASRWADPDHFAQRQTCMNKFASWFGGMPLVHSQMRLDPVLFKDQVSILRKKYREIERL.

At 1–7 (MQAKKRY) the chain is on the cytoplasmic side. The chain crosses the membrane as a helical; Signal-anchor for type II membrane protein span at residues 8-28 (LISLLTGAFLVLLIYLGGGGV). Topologically, residues 29–741 (PGPAAPGSRS…RKKYREIERL (713 aa)) are lumenal. Residues Asn-84 and Asn-325 are each glycosylated (N-linked (GlcNAc...) asparagine). The UDP-N-acetyl-alpha-D-glucosamine site is built by Arg-435, Arg-544, Asp-560, Glu-561, Asp-562, Glu-648, Asp-649, and Arg-696. Residue Asp-562 participates in Mn(2+) binding. Cys-647 and Cys-699 are oxidised to a cystine. Residue Asp-649 is part of the active site.

Belongs to the glycosyltransferase 47 family. The cofactor is Mn(2+).

It localises to the endoplasmic reticulum membrane. The enzyme catalyses 3-O-{[(1-&gt;4)-beta-D-GlcA-(1-&gt;4)-alpha-D-GlcNAc](n)-(1-&gt;4)-beta-D-GlcA-(1-&gt;3)-beta-D-Gal-(1-&gt;3)-beta-D-Gal-(1-&gt;4)-beta-D-Xyl}-L-seryl-[protein] + UDP-N-acetyl-alpha-D-glucosamine = 3-O-{alpha-D-GlcNAc-[(1-&gt;4)-beta-D-GlcA-(1-&gt;4)-alpha-D-GlcNAc](n)-(1-&gt;4)-beta-D-GlcA-(1-&gt;3)-beta-D-Gal-(1-&gt;3)-beta-D-Gal-(1-&gt;4)-beta-D-Xyl}-L-seryl-[protein] + UDP + H(+). It catalyses the reaction 3-O-{alpha-D-GlcNAc-[(1-&gt;4)-beta-D-GlcA-(1-&gt;4)-alpha-D-GlcNAc](n)-(1-&gt;4)-beta-D-GlcA-(1-&gt;3)-beta-D-Gal-(1-&gt;3)-beta-D-Gal-(1-&gt;4)-beta-D-Xyl}-L-seryl-[protein] + UDP-alpha-D-glucuronate = 3-O-{[(1-&gt;4)-beta-D-GlcA-(1-&gt;4)-alpha-D-GlcNAc](n+1)-(1-&gt;4)-beta-D-GlcA-(1-&gt;3)-beta-D-Gal-(1-&gt;3)-beta-D-Gal-(1-&gt;4)-beta-D-Xyl}-L-seryl-[protein] + UDP + H(+). It participates in protein modification; protein glycosylation. Its function is as follows. Glycosyltransferase required for the biosynthesis of heparan-sulfate. The sequence is that of Exostosin-1b (ext1b) from Danio rerio (Zebrafish).